Consider the following 149-residue polypeptide: Deoxyuridine 5'-triphosphate nucleotidohydrolase (149 aa).

Substrate contacts are provided by residues arginine 65–glycine 67, asparagine 78, threonine 82–aspartate 84, and lysine 92.

Belongs to the dUTPase family. The cofactor is Mg(2+).

The catalysed reaction is dUTP + H2O = dUMP + diphosphate + H(+). It functions in the pathway pyrimidine metabolism; dUMP biosynthesis; dUMP from dCTP (dUTP route): step 2/2. In terms of biological role, this enzyme is involved in nucleotide metabolism: it produces dUMP, the immediate precursor of thymidine nucleotides and it decreases the intracellular concentration of dUTP so that uracil cannot be incorporated into DNA. This is Deoxyuridine 5'-triphosphate nucleotidohydrolase from Chlorobium chlorochromatii (strain CaD3).